The chain runs to 401 residues: Chalcone synthase 4 (401 aa).

Cys168 is an active-site residue.

This sequence belongs to the thiolase-like superfamily. Chalcone/stilbene synthases family.

It carries out the reaction (E)-4-coumaroyl-CoA + 3 malonyl-CoA + 3 H(+) = 2',4,4',6'-tetrahydroxychalcone + 3 CO2 + 4 CoA. Its pathway is secondary metabolite biosynthesis; flavonoid biosynthesis. Functionally, the primary product of this enzyme is 4,2',4',6'-tetrahydroxychalcone (also termed naringenin-chalcone or chalcone) which can under specific conditions spontaneously isomerize into naringenin. The sequence is that of Chalcone synthase 4 (CHS4) from Sorghum bicolor (Sorghum).